Here is a 469-residue protein sequence, read N- to C-terminus: Acyltransferase clz18 (469 aa).

7 helical membrane-spanning segments follow: residues 21 to 41 (GLLS…LGYD), 70 to 90 (LFTI…CLFF), 134 to 154 (LSLL…TGFF), 253 to 273 (ILAA…PLFW), 346 to 366 (GLIV…LYSL), 391 to 411 (IYLI…SWVW), and 424 to 444 (VGFG…AAIF).

Belongs to the acyltransferase 3 family.

It is found in the membrane. It functions in the pathway secondary metabolite biosynthesis. Functionally, acyltransferase; part of the gene cluster that mediates the biosynthesis of squalestatin S1 (SQS1, also known as zaragozic acid A), a heavily oxidized fungal polyketide that offers potent cholesterol lowering activity by targeting squalene synthase (SS). SQS1 is composed of a 2,8-dioxobicyclic[3.2.1]octane-3,4,5-tricarboxyclic acid core that is connected to two lipophilic polyketide arms. These initial steps feature the priming of an unusual benzoic acid starter unit onto the highly reducing polyketide synthase clz14, followed by oxaloacetate extension and product release to generate a tricarboxylic acid containing product. The phenylalanine ammonia lyase (PAL) clz10 and the acyl-CoA ligase clz12 are involved in transforming phenylalanine into benzoyl-CoA. The citrate synthase-like protein clz17 is involved in connecting the C-alpha-carbons of the hexaketide chain and oxaloacetate to afford the tricarboxylic acid unit. The potential hydrolytic enzymes, clz11 and clz13, are in close proximity to pks2 and may participate in product release. On the other side, the tetraketide arm is synthesized by a the squalestatin tetraketide synthase clz2 and enzymatically esterified to the core in the last biosynthetic step, by the acetyltransferase clz6. The biosynthesis of the tetraketide must involve 3 rounds of chain extension. After the first and second rounds methyl-transfer occurs, and in all rounds of extension the ketoreductase and dehydratase are active. The enoyl reductase and C-MeT of clz2 are not active in the final round of extension. The acetyltransferase clz6 appears to have a broad substrate selectivity for its acyl CoA substrate, allowing the in vitro synthesis of novel squalestatins. The biosynthesis of SQS1 requires several oxidative steps likely performed by oxidoreductases clz3, clz15 and clz16. Finally, in support of the identification of the cluster as being responsible for SQS1 production, the cluster contains a gene encoding a putative squalene synthase (SS) clz20, suggesting a likely mechanism for self-resistance. The chain is Acyltransferase clz18 from Cochliobolus lunatus (Filamentous fungus).